A 373-amino-acid polypeptide reads, in one-letter code: SUN domain-containing protein 5 (373 aa).

Residues 1-103 (MPRTRNIGAL…LFCQKVMEKM (103 aa)) lie on the Nuclear side of the membrane. The helical transmembrane segment at 104–120 (GLLVLCVFGFWMFSMHL) threads the bilayer. The Perinuclear space portion of the chain corresponds to 121 to 373 (PSKVEVWQDD…PKDSHLEPLS (253 aa)). A coiled-coil region spans residues 136-180 (LQSLRMYQEKVRHHTGEIQDLRGSMNQLIAKLQKMEAISDEQKMA). The region spanning 204 to 362 (ASIDFEHTSA…YRVRVHGSVT (159 aa)) is the SUN domain.

As to quaternary structure, probable homotrimer. Interacts with DNAJB13. Post-translationally, highly glycosylated in the Golgi apparatus during spermiogenesis. Testis-specific, abundantly expressed in spermatocytes and round spermatids.

It localises to the nucleus inner membrane. Its subcellular location is the golgi apparatus. In terms of biological role, plays an essential role in anchoring sperm head to the tail. Is responsible for the attachment of the coupling apparatus to the sperm nuclear envelope. This is SUN domain-containing protein 5 (Sun5) from Mus musculus (Mouse).